A 495-amino-acid polypeptide reads, in one-letter code: MVSETTKSSPLHFVLFPFMAQGHMIPMVDIARLLAQRGVIITIVTTPHNAARFKNVLNRAIESGLPINLVQVKFPYLEAGLQEGQENIDSLDTMERMIPFFKAVNFLEEPVQKLIEEMNPRPSCLISDFCLPYTSKIAKKFNIPKILFHGMGCFCLLCMHVLRKNREILDNLKSDKELFTVPDFPDRVEFTRTQVPVETYVPAGDWKDIFDGMVEANETSYGVIVNSFQELEPAYAKDYKEVRSGKAWTIGPVSLCNKVGADKAERGNKSDIDQDECLKWLDSKKHGSVLYVCLGSICNLPLSQLKELGLGLEESQRPFIWVIRGWEKYKELVEWFSESGFEDRIQDRGLLIKGWSPQMLILSHPSVGGFLTHCGWNSTLEGITAGLPLLTWPLFADQFCNEKLVVEVLKAGVRSGVEQPMKWGEEEKIGVLVDKEGVKKAVEELMGESDDAKERRRRAKELGDSAHKAVEEGGSSHSNISFLLQDIMELAEPNN.

A helical membrane pass occupies residues 146–162 (ILFHGMGCFCLLCMHVL). UDP-alpha-D-glucose-binding positions include serine 296, 356-358 (SPQ), 373-381 (HCGWNSTLE), and 395-398 (FADQ). Residues 446 to 477 (MGESDDAKERRRRAKELGDSAHKAVEEGGSSH) form a disordered region. Over residues 450–471 (DDAKERRRRAKELGDSAHKAVE) the composition is skewed to basic and acidic residues.

The protein belongs to the UDP-glycosyltransferase family. In terms of tissue distribution, elongating hypocotyls and root-specific. Expressed in the vascular system, in meristematic tissues of the root tip, and in the vasculature of the hypocotyl right after germination. In late stage of flower development, expressed in petals, and in abscission zones.

The protein localises to the membrane. Functionally, specifically catalyzes 23-O-glucosylation of brassinosteroids, resulting probably in their inactivation. Also, involved in the O-glucosylation of trans-zeatin and dihydrozeatin. Active in vitro on cis-zeatin, dihydrozeatin-9-N-Glc, and olomoucine. Also involved in the detoxification of the Fusarium mycotoxin deoxynivalenol by the transfer of glucose from UDP-glucose to the hydroxyl group at C-3. Possesses low quercetin 7-O-glucosyltransferase and 4'-O-glucosyltransferase activities in vitro. In Arabidopsis thaliana (Mouse-ear cress), this protein is UDP-glycosyltransferase 73C5 (UGT73C5).